The chain runs to 125 residues: Small ribosomal subunit protein uS12m (125 aa).

It belongs to the universal ribosomal protein uS12 family. As to quaternary structure, component of the mitochondrial ribosome small subunit.

The protein resides in the mitochondrion. Protein S12 is involved in the translation initiation step. This chain is Small ribosomal subunit protein uS12m (RPS12), found in Arabidopsis thaliana (Mouse-ear cress).